The sequence spans 146 residues: Microsomal glutathione S-transferase 2 (146 aa).

A run of 3 helical transmembrane segments spans residues 6 to 26 (ILLAALSVLSACQQSYFAMQV), 59 to 79 (FYPIFIITLWMAGWYFNQVFA), and 111 to 131 (SLGVLALLTVLGAVGILNSFL).

It belongs to the MAPEG family. As to quaternary structure, homotrimer.

It is found in the endoplasmic reticulum membrane. The protein localises to the microsome membrane. It carries out the reaction RX + glutathione = an S-substituted glutathione + a halide anion + H(+). It catalyses the reaction 1-chloro-2,4-dinitrobenzene + glutathione = 2,4-dinitrophenyl-S-glutathione + chloride + H(+). The catalysed reaction is leukotriene C4 = leukotriene A4 + glutathione. The enzyme catalyses (5S)-hydroperoxy-(6E,8Z,11Z,14Z)-eicosatetraenoate + 2 glutathione = (5S)-hydroxy-(6E,8Z,11Z,14Z)-eicosatetraenoate + glutathione disulfide + H2O. Each monomer binds on GSH molecule but only one subunit is catalytically active. Functionally, catalyzes several different glutathione-dependent reactions. Catalyzes the glutathione-dependent reduction of lipid hydroperoxides, such as 5-HPETE. Has glutathione transferase activity, toward xenobiotic electrophiles, such as 1-chloro-2, 4-dinitrobenzene (CDNB). Also catalyzes the conjugation of leukotriene A4 with reduced glutathione to form leukotriene C4 (LTC4). Involved in oxidative DNA damage induced by ER stress and anticancer agents by activating LTC4 biosynthetic machinery in nonimmune cells. The protein is Microsomal glutathione S-transferase 2 (MGST2) of Bos taurus (Bovine).